A 762-amino-acid polypeptide reads, in one-letter code: FAST kinase domain-containing protein 5, mitochondrial (762 aa).

S95 is subject to Phosphoserine. K506 carries the post-translational modification N6-acetyllysine. Residues 695 to 755 (LAIQFTNKNQ…RLEKLAYLHE (61 aa)) enclose the RAP domain.

Belongs to the FAST kinase family. In terms of assembly, found in a complex with GRSF1, DDX28, DHX30 and FASTKD2. Associates with the 12S mitochondrial rRNA (12S mt-rRNA). Expression detected in spleen, testis, colon, heart, smooth muscle, kidney, brain, lung, liver, brown and white adipose tissue.

It localises to the mitochondrion matrix. It is found in the mitochondrion nucleoid. Plays an important role in the processing of non-canonical mitochondrial mRNA precursors. This is FAST kinase domain-containing protein 5, mitochondrial (Fastkd5) from Mus musculus (Mouse).